The sequence spans 364 residues: tRNA 2-selenouridine synthase (364 aa).

Residues 14–137 (LIADTPIIDV…LRQTAIQATI (124 aa)) form the Rhodanese domain. The active-site S-selanylcysteine intermediate is Cys97.

The protein belongs to the SelU family. In terms of assembly, monomer.

It catalyses the reaction 5-methylaminomethyl-2-thiouridine(34) in tRNA + selenophosphate + (2E)-geranyl diphosphate + H2O + H(+) = 5-methylaminomethyl-2-selenouridine(34) in tRNA + (2E)-thiogeraniol + phosphate + diphosphate. The enzyme catalyses 5-methylaminomethyl-2-thiouridine(34) in tRNA + (2E)-geranyl diphosphate = 5-methylaminomethyl-S-(2E)-geranyl-thiouridine(34) in tRNA + diphosphate. The catalysed reaction is 5-methylaminomethyl-S-(2E)-geranyl-thiouridine(34) in tRNA + selenophosphate + H(+) = 5-methylaminomethyl-2-(Se-phospho)selenouridine(34) in tRNA + (2E)-thiogeraniol. It carries out the reaction 5-methylaminomethyl-2-(Se-phospho)selenouridine(34) in tRNA + H2O = 5-methylaminomethyl-2-selenouridine(34) in tRNA + phosphate. Its function is as follows. Involved in the post-transcriptional modification of the uridine at the wobble position (U34) of tRNA(Lys), tRNA(Glu) and tRNA(Gln). Catalyzes the conversion of 2-thiouridine (S2U-RNA) to 2-selenouridine (Se2U-RNA). Acts in a two-step process involving geranylation of 2-thiouridine (S2U) to S-geranyl-2-thiouridine (geS2U) and subsequent selenation of the latter derivative to 2-selenouridine (Se2U) in the tRNA chain. This Escherichia coli O81 (strain ED1a) protein is tRNA 2-selenouridine synthase.